The primary structure comprises 544 residues: Ceramide glucosyltransferase (544 aa).

Over 1-15 (MVQEELSLFRITTGY) the chain is Lumenal. A helical transmembrane segment spans residues 16–36 (FFLLWYIIILVAAYSGFFEIL). At 37-427 (FNFRNRPILH…LATLIEPTTE (391 aa)) the chain is on the cytoplasmic side. Position 109 (Asp109) is a short sequence motif, D1. Asp171 is a short sequence motif (D2). A short sequence motif (D3) is located at residue Asp364. The active-site Proton acceptor is the Asp364. The (Q/R)XXRW signature appears at 404-408 (RRVRW). The helical transmembrane segment at 428-448 (SIICGIYGTYAISTVFFGTWF) threads the bilayer. Residues 449–451 (NKY) are Lumenal-facing. Residues 452–472 (WFVMHMLIWMLTDYVQYHTLI) traverse the membrane as a helical segment. Topologically, residues 473–501 (NHTLDVKNITYLPNWLNESIPPKQRNCLQ) are cytoplasmic. The chain crosses the membrane as a helical span at residues 502-522 (WGYIWILRELLALPIWIIAMI). Over 523-544 (GHEIDWRGRPFRIKKDLTAEEM) the chain is Lumenal.

It belongs to the glycosyltransferase 2 family.

It is found in the golgi apparatus membrane. The enzyme catalyses an N-acylsphing-4-enine + UDP-alpha-D-glucose = a beta-D-glucosyl-(1&lt;-&gt;1')-N-acylsphing-4-enine + UDP + H(+). It functions in the pathway lipid metabolism; sphingolipid metabolism. In terms of biological role, catalyzes the final step in the biosynthesis of the membrane lipid glucosylceramide (GluCer), the transfer of glucose to ceramide. Glucosylceramides play important roles in growth, differentiation and pathogenicity. This is Ceramide glucosyltransferase from Candida albicans (strain SC5314 / ATCC MYA-2876) (Yeast).